The following is a 257-amino-acid chain: Imidazole glycerol phosphate synthase subunit HisF (257 aa).

Catalysis depends on residues aspartate 12 and aspartate 131.

Belongs to the HisA/HisF family. As to quaternary structure, heterodimer of HisH and HisF.

It localises to the cytoplasm. It catalyses the reaction 5-[(5-phospho-1-deoxy-D-ribulos-1-ylimino)methylamino]-1-(5-phospho-beta-D-ribosyl)imidazole-4-carboxamide + L-glutamine = D-erythro-1-(imidazol-4-yl)glycerol 3-phosphate + 5-amino-1-(5-phospho-beta-D-ribosyl)imidazole-4-carboxamide + L-glutamate + H(+). The protein operates within amino-acid biosynthesis; L-histidine biosynthesis; L-histidine from 5-phospho-alpha-D-ribose 1-diphosphate: step 5/9. IGPS catalyzes the conversion of PRFAR and glutamine to IGP, AICAR and glutamate. The HisF subunit catalyzes the cyclization activity that produces IGP and AICAR from PRFAR using the ammonia provided by the HisH subunit. The polypeptide is Imidazole glycerol phosphate synthase subunit HisF (Nocardia farcinica (strain IFM 10152)).